Consider the following 302-residue polypeptide: tRNA dimethylallyltransferase (302 aa).

9 to 16 (GPTGSGKT) lines the ATP pocket. 11 to 16 (TGSGKT) contacts substrate.

The protein belongs to the IPP transferase family. In terms of assembly, monomer. Requires Mg(2+) as cofactor.

The enzyme catalyses adenosine(37) in tRNA + dimethylallyl diphosphate = N(6)-dimethylallyladenosine(37) in tRNA + diphosphate. Its function is as follows. Catalyzes the transfer of a dimethylallyl group onto the adenine at position 37 in tRNAs that read codons beginning with uridine, leading to the formation of N6-(dimethylallyl)adenosine (i(6)A). The polypeptide is tRNA dimethylallyltransferase (Thermus thermophilus (strain ATCC BAA-163 / DSM 7039 / HB27)).